The sequence spans 567 residues: uncharacterized protein (567 aa).

6 helical membrane passes run 20–40, 69–89, 95–115, 126–146, 168–188, and 528–548; these read FTIL…SGVL, SLET…SVFI, AYLT…VALI, ILLN…FMCL, IPLV…YLLF, and IFGS…LLAI.

It localises to the cell membrane. This is an uncharacterized protein from Escherichia coli (strain K12).